We begin with the raw amino-acid sequence, 1193 residues long: Stress response protein nst1 (1193 aa).

7 disordered regions span residues 1–197, 288–368, 422–468, 508–815, 857–942, 966–988, and 1145–1193; these read MVPA…SHNI, QGSF…TRAA, ESLH…EQRM, MEEE…MVAR, MPPG…TQRD, TLSQ…RASF, and DNNS…PMGF. Positions 10 to 29 are enriched in low complexity; it reads SPSSTMLNSSSTTAHAAPST. Residues 53-63 show a composition bias toward basic residues; sequence NRKKQKRRQKQ. Residues 64–73 are compositionally biased toward low complexity; sequence AARLAERQLA. A compositionally biased stretch (polar residues) spans 76-90; the sequence is HVSTDDTTQNGSSHA. The span at 91–128 shows a compositional bias: basic and acidic residues; the sequence is NPERYHSDDGGADGPDHEQPTNGDVYDKDGQDSMDAHV. A compositionally biased stretch (polar residues) spans 129 to 140; it reads DSQNPQGPNGTE. Residues 146–160 are compositionally biased toward basic residues; the sequence is TGRKSKKKKGKKARN. Positions 169-182 are enriched in low complexity; the sequence is TSTPMSTPSVSMSH. Polar residues predominate over residues 312–321; sequence GQHTRTQGQF. 2 stretches are compositionally biased toward acidic residues: residues 332–364 and 434–463; these read TEED…EDEE and DDED…DAMT. Residues 448 to 659 are a coiled coil; sequence SQEEEDYEED…EEQAKKDTAK (212 aa). Composition is skewed to basic and acidic residues over residues 508-527 and 537-675; these read MEEE…EAQK and QAKE…DQAK. Positions 722–740 are enriched in low complexity; sequence RQPSQQDSHSSSPHSQAPS. The span at 741–769 shows a compositional bias: polar residues; that stretch reads TDPSQASLSPRSMPVSQSSGVASGNSQQG. The span at 914-926 shows a compositional bias: low complexity; it reads PISRPSPIKRPSS. Over residues 933–942 the composition is skewed to basic and acidic residues; the sequence is KGGDRTTQRD. Low complexity predominate over residues 972-986; that stretch reads PGATAPGTFPGPARA. Positions 1182–1193 are enriched in polar residues; sequence VLRQYSSPPMGF.

Belongs to the NST1 family.

Its subcellular location is the cytoplasm. May act as a negative regulator of salt tolerance. The chain is Stress response protein nst1 (nst1) from Neosartorya fischeri (strain ATCC 1020 / DSM 3700 / CBS 544.65 / FGSC A1164 / JCM 1740 / NRRL 181 / WB 181) (Aspergillus fischerianus).